We begin with the raw amino-acid sequence, 41 residues long: Pi-stichotoxin-Hcr5b (41 aa).

Cystine bridges form between Cys4–Cys37, Cys6–Cys30, and Cys20–Cys38.

This sequence belongs to the sea anemone type 3 (BDS) potassium channel toxin family.

The protein localises to the secreted. It is found in the nematocyst. In terms of biological role, remarkably non-selective toxin, with activity on many different ion channels. Weakly and reversibly inhibits rat and human homomeric ASIC1 (isoform ASIC1a) (IC(50)=4.8 uM, and IC(50)=14.6 uM), and ASIC3 (IC(50)=15.9 uM). Molecular modeling interaction with ASIC1a suggests that this peptide hinders the collapse of acidic pockets and stabilizes nonconducting channels state. It activates several potassium channels including Kv1.1/KCNA1, Kv1.2/KCNA2, and drosophila Shaker IR. It moderately to potently inhibits potassium channels including Kv1.3/KCNA3, Kv1.4/KCNA4, Kv1.5/KCNA5, Kv1.6/KCNA6, Kv2.1/KCNB1, Kv4.2/KCND2, Kv7.1/KCNQ1, Kv7.2/Kv7.3 (KCNQ2/KCNQ3), Kv7.4/KCNQ4, hERG/KCNH2, and C.elegans QKT1. On sodium channels, it moderately to potently inhibits Nav1.1/SCN1A, Nav1.2/SCN2A, Nav1.3/SCN3A, Nav1.4/SCN4A, Nav1.5/SCN5A, Nav1.6/SCN8A, Nav1.7/SCN9A, Nav1.8/SCN10A, and B.germanica BgNav. It also moderately to potently inhibits Cav3.1/CACNA1G, Cav3.2/CACNA1H, and Cav3.3/CACNA1I. Significant shifts in the voltage-current relationship are observed on Kv and Nav, depending on the channel isoform, whereas the toxin does not seem to modulate the voltage-sensor domains of Cav channels, acting mainly as a pore blocker. Does not activate nicotinic acetylcholine receptors (nAChR), but potentiates ACh-elicited current of human alpha-7/CHRNA7 nAChR. Is also able to bind T.californica muscle-type nAChRs. In vivo, causes an excitatory effect in mice behavior. Also shows antihyperalgesic and analgesic activity in the acid-induced muscle pain mice model, and weak anti-inflammatory effect in models of acute local inflammation. This chain is Pi-stichotoxin-Hcr5b, found in Radianthus crispa (Leathery sea anemone).